The sequence spans 395 residues: Elongation factor Tu (395 aa).

A tr-type G domain is found at 10–204 (KPHVNIGTIG…TVDEYIPTPQ (195 aa)). The segment at 19–26 (GHVDHGKT) is G1. GTP is bound at residue 19-26 (GHVDHGKT). Mg(2+) is bound at residue T26. A G2 region spans residues 60-64 (GITIN). The segment at 81–84 (DAPG) is G3. GTP is bound by residues 81 to 85 (DAPGH) and 136 to 139 (NKCD). The interval 136-139 (NKCD) is G4. Residues 174 to 176 (SAL) form a G5 region.

It belongs to the TRAFAC class translation factor GTPase superfamily. Classic translation factor GTPase family. EF-Tu/EF-1A subfamily. As to quaternary structure, monomer.

It localises to the cytoplasm. The catalysed reaction is GTP + H2O = GDP + phosphate + H(+). Functionally, GTP hydrolase that promotes the GTP-dependent binding of aminoacyl-tRNA to the A-site of ribosomes during protein biosynthesis. This Ligilactobacillus salivarius (strain UCC118) (Lactobacillus salivarius) protein is Elongation factor Tu.